The following is an 83-amino-acid chain: U5-theraphotoxin-Hs1b 2 (83 aa).

An N-terminal signal peptide occupies residues 1-21 (MQTSMFLTLTGLVLLFVVCYA). Positions 22–49 (SESEEKEFPKELLSSIFAADSDFKEEER) are excised as a propeptide. 3 disulfide bridges follow: Cys51–Cys63, Cys56–Cys68, and Cys62–Cys75.

Belongs to the neurotoxin 10 (Hwtx-1) family. 51 (Hntx-8) subfamily. Hntx-8 sub-subfamily. As to expression, expressed by the venom gland.

The protein resides in the secreted. Agglutinates erythrocytes. This is U5-theraphotoxin-Hs1b 2 from Cyriopagopus schmidti (Chinese bird spider).